A 127-amino-acid chain; its full sequence is Histone H2B.2 (127 aa).

The segment at 1-35 is disordered; sequence MAPKAEKKPASKAPAAKKTTASTDASKKRTKTRKE. An N6-acetyllysine; alternate mark is found at Lys-7 and Lys-8. Glycyl lysine isopeptide (Lys-Gly) (interchain with G-Cter in SUMO); alternate cross-links involve residues Lys-7 and Lys-8. Phosphoserine is present on Ser-11. Residues 11–24 are compositionally biased toward low complexity; it reads SKAPAAKKTTASTD. Lys-12 carries the N6-acetyllysine modification. Lys-120 participates in a covalent cross-link: Glycyl lysine isopeptide (Lys-Gly) (interchain with G-Cter in ubiquitin).

Belongs to the histone H2B family. As to quaternary structure, the nucleosome is a histone octamer containing two molecules each of H2A, H2B, H3 and H4 assembled in one H3-H4 heterotetramer and two H2A-H2B heterodimers. The octamer wraps approximately 147 bp of DNA. In terms of processing, monoubiquitinated by the UBC2-BRE1 complex to form H2BK123ub1. H2BK123ub1 gives a specific tag for epigenetic transcriptional activation and is also prerequisite for H3K4me and H3K79me formation. H2BK123ub1 also modulates the formation of double-strand breaks during meiosis and is a prerequisite for DNA-damage checkpoint activation. Post-translationally, phosphorylated by STE20 to form H2BS10ph during progression through meiotic prophase. May be correlated with chromosome condensation. Acetylation of N-terminal lysines and particularly formation of H2BK11ac has a positive effect on transcription. In terms of processing, sumoylation to form H2BK6su or H2BK7su occurs preferentially near the telomeres and represses gene transcription.

Its subcellular location is the nucleus. The protein resides in the chromosome. Core component of nucleosome. Nucleosomes wrap and compact DNA into chromatin, limiting DNA accessibility to the cellular machineries which require DNA as a template. Histones thereby play a central role in transcription regulation, DNA repair, DNA replication and chromosomal stability. DNA accessibility is regulated via a complex set of post-translational modifications of histones, also called histone code, and nucleosome remodeling. This chain is Histone H2B.2 (HTB2), found in Eremothecium gossypii (strain ATCC 10895 / CBS 109.51 / FGSC 9923 / NRRL Y-1056) (Yeast).